The following is a 491-amino-acid chain: MAHYINIYGKRLFDIGLYLKTSVDLILQQQHVLMSQQKFTDISLCHREAPNPKLDLPDDNRLSPLTELEDIGQQSKTLGTAIHRKISEQKRVIESGSVASIVEHKRTNLSAIMATRANIPEQVRGAPLVDGLKIQNKNGAVKNRRALGDIGNLVSVPGVQGGKAQPPINRPITLSFRAQLLANAQLERKPINGDNKVPALGPKSQPLAARNPEAQRAVQKKNLVVKQQTKPVEVIETKRNAQSKAACGIVNKPKILDIDESDKDNHVAAVEYVDDMYSFYKEVEKESQPKMYMHIQTEMNEKMRAILIDWLLEVHIKFELNLETLYLTVNIIDRFLYVKAVPKRELQVNDLVYVTDNAYSSRQILVMKKAILGNLEWYLTIPTQYVFLFCFIKASISDPEVLHVQKKNLQASKTKSFSIQVLSFSSHKSIVKSDQFCKKFNLCQEVTALASEFHLGNCEAWRETVTKLKDPETKCLKVVFEYTASDACGYG.

Residues 275–347 (DMYSFYKEVE…VKAVPKRELQ (73 aa)) enclose the Cyclin N-terminal domain.

Belongs to the cyclin family. Cyclin AB subfamily. As to expression, expressed in roots, stems and flowers.

The chain is Cyclin-B1-5 (CYCB1-5) from Arabidopsis thaliana (Mouse-ear cress).